A 545-amino-acid chain; its full sequence is Cytosolic Fe-S cluster assembly factor NAR1 (545 aa).

[4Fe-4S] cluster-binding residues include Cys-20, Cys-74, Cys-77, Cys-80, Cys-188, Cys-243, Cys-454, and Cys-458.

This sequence belongs to the NARF family.

Functionally, component of the cytosolic Fe/S protein assembly machinery. Required for maturation of extramitochondrial Fe/S proteins. May play a role in the transfer of pre-assembled Fe/S clusters to target apoproteins. This is Cytosolic Fe-S cluster assembly factor NAR1 (NAR1) from Scheffersomyces stipitis (strain ATCC 58785 / CBS 6054 / NBRC 10063 / NRRL Y-11545) (Yeast).